Reading from the N-terminus, the 198-residue chain is Thymidylate kinase (198 aa).

10 to 17 (GLDGSGKT) lines the ATP pocket.

The protein belongs to the thymidylate kinase family.

The enzyme catalyses dTMP + ATP = dTDP + ADP. Functionally, phosphorylation of dTMP to form dTDP in both de novo and salvage pathways of dTTP synthesis. This chain is Thymidylate kinase, found in Thermus thermophilus (strain ATCC BAA-163 / DSM 7039 / HB27).